The primary structure comprises 489 residues: uncharacterized protein (489 aa).

12 helical membrane-spanning segments follow: residues 14–34 (LLFV…ISLF), 36–56 (LGPF…IVTL), 100–120 (IIGP…FSGI), 127–147 (LVNT…LAFI), 158–178 (LIAL…IVAI), 203–223 (EISF…YAGV), 241–261 (ILIV…IILN), 286–306 (AAGL…NVST), 344–364 (IWFT…IPLV), 380–400 (VGSA…FKFI), 419–439 (LFCL…FPVI), and 449–469 (HTLT…LFLL).

It to M.genitalium MG226.

It is found in the cell membrane. This is an uncharacterized protein from Mycoplasma genitalium (strain ATCC 33530 / DSM 19775 / NCTC 10195 / G37) (Mycoplasmoides genitalium).